Reading from the N-terminus, the 580-residue chain is TRAF-type zinc finger domain-containing protein 1 (580 aa).

Ala2 carries the N-acetylalanine modification. A TRAF-type zinc finger spans residues Ile27 to Lys103. Ser278, Ser320, Ser326, Ser327, Ser409, Ser415, Ser430, Ser450, Ser469, and Ser532 each carry phosphoserine. Disordered stretches follow at residues Thr395 to Arg453, Pro468 to His509, and Phe524 to Glu580. The span at Gln407–Glu417 shows a compositional bias: polar residues.

In terms of assembly, interacts with MAVS, TICAM1, TRAF1, TRAF2, TRAF3 and TRAF6. As to expression, expressed in skeletal muscle, brain, liver, kidney, spleen and bone marrow. Expression depends on STAT1.

In terms of biological role, negative feedback regulator that controls excessive innate immune responses. Regulates both Toll-like receptor 4 (TLR4) and DDX58/RIG1-like helicases (RLH) pathways. May inhibit the LTR pathway by direct interaction with TRAF6 and attenuation of NF-kappa-B activation. May negatively regulate the RLH pathway downstream from MAVS and upstream of NF-kappa-B and IRF3. The protein is TRAF-type zinc finger domain-containing protein 1 (Trafd1) of Mus musculus (Mouse).